A 341-amino-acid chain; its full sequence is MKVGIVNDSALAVAALRRAIALDPAFEIVWVAGDGEQAVQLAASHTPDVILMDLLMPVMDGVEATRRIMAATPCPIVVVTTDLGRNATQVFDAMGHGAIDAVDTPTLTESDAKLTAGPLLRKMRNIGRLVAGRAAPRPAITEMPGTLAASRLVAIGASAGGPAALAKLLGALPADFCAAVVAVQHVDEAFAPGMADWLDSQCALPVRVAAPGETPQAGTVLIAGTNNHLRLLGSNRMAYTEQPSEYLYRPSIDVFFESVVEYWRGQAIGVLLTGMGRDGASGLKAMRDHGCLTIAQDQATSAVYGMPKAAAAMGAASEILPLTAIAPRLVQACCSVRPPPG.

Residues 2–119 (KVGIVNDSAL…SDAKLTAGPL (118 aa)) form the Response regulatory domain. D53 carries the 4-aspartylphosphate modification. The CheB-type methylesterase domain occupies 146-331 (TLAASRLVAI…LTAIAPRLVQ (186 aa)). Active-site residues include S158, H185, and D278.

It belongs to the CheB family. In terms of processing, phosphorylated by CheA. Phosphorylation of the N-terminal regulatory domain activates the methylesterase activity.

It localises to the cytoplasm. It carries out the reaction [protein]-L-glutamate 5-O-methyl ester + H2O = L-glutamyl-[protein] + methanol + H(+). It catalyses the reaction L-glutaminyl-[protein] + H2O = L-glutamyl-[protein] + NH4(+). Involved in chemotaxis. Part of a chemotaxis signal transduction system that modulates chemotaxis in response to various stimuli. Catalyzes the demethylation of specific methylglutamate residues introduced into the chemoreceptors (methyl-accepting chemotaxis proteins or MCP) by CheR. Also mediates the irreversible deamidation of specific glutamine residues to glutamic acid. The chain is Protein-glutamate methylesterase/protein-glutamine glutaminase 1 from Cupriavidus pinatubonensis (strain JMP 134 / LMG 1197) (Cupriavidus necator (strain JMP 134)).